The following is a 92-amino-acid chain: Small ribosomal subunit protein uS19 (92 aa).

Belongs to the universal ribosomal protein uS19 family.

In terms of biological role, protein S19 forms a complex with S13 that binds strongly to the 16S ribosomal RNA. This Lachnoclostridium phytofermentans (strain ATCC 700394 / DSM 18823 / ISDg) (Clostridium phytofermentans) protein is Small ribosomal subunit protein uS19.